The primary structure comprises 122 residues: Large ribosomal subunit protein uL18 (122 aa).

Positions 1 to 25 (MSTLSRKQQTQKRHRRLRRHLSGTA) are disordered. A compositionally biased stretch (basic residues) spans 9-21 (QTQKRHRRLRRHL).

Belongs to the universal ribosomal protein uL18 family. In terms of assembly, part of the 50S ribosomal subunit; part of the 5S rRNA/L5/L18/L25 subcomplex. Contacts the 5S and 23S rRNAs.

This is one of the proteins that bind and probably mediate the attachment of the 5S RNA into the large ribosomal subunit, where it forms part of the central protuberance. This is Large ribosomal subunit protein uL18 from Synechococcus sp. (strain CC9311).